Consider the following 273-residue polypeptide: Nicotinamide N-methyltransferase (273 aa).

Residues tyrosine 35, tyrosine 40, 74–75, tyrosine 80, aspartate 96, asparagine 101, and 152–153 contribute to the S-adenosyl-L-methionine site; these read GA and NV.

This sequence belongs to the class I-like SAM-binding methyltransferase superfamily. NNMT/PNMT/TEMT family.

It carries out the reaction nicotinamide + S-adenosyl-L-methionine = 1-methylnicotinamide + S-adenosyl-L-homocysteine. Its function is as follows. Catalyzes the N-methylation of nicotinamide and other pyridines to form pyridinium ions. Involved in regulation of lifespan extension downstream of the sirtuin sir-2.1, probably through its role in nicotinic acid metabolism. This chain is Nicotinamide N-methyltransferase, found in Caenorhabditis elegans.